Consider the following 2771-residue polypeptide: Teneurin-4 (2771 aa).

Over residues 1-22 (MDVKERKPYRSLTRRRDAERRY) the composition is skewed to basic and acidic residues. The segment at 1-45 (MDVKERKPYRSLTRRRDAERRYTSSSADSEEGKGPQKSYSSSETL) is disordered. Residues 1 to 341 (MDVKERKPYR…KPSKYCNWKC (341 aa)) form the Teneurin N-terminal domain. Topologically, residues 1–345 (MDVKERKPYR…YCNWKCAALS (345 aa)) are cytoplasmic. Phosphoserine is present on S124. The segment at 132–233 (WGRSTRSGRS…PPAGSAQEPT (102 aa)) is disordered. Low complexity predominate over residues 134-155 (RSTRSGRSSCLSSRANSNLTLT). Positions 156-166 (DTEHENTETDH) are enriched in basic and acidic residues. T178 bears the Phosphothreonine mark. The segment covering 191-211 (QHHAASINSLNRGNFTPRSNP) has biased composition (polar residues). Residues 346–366 (AILISATLVILLAYFVAMHLF) traverse the membrane as a helical segment. At 367–2771 (GLNWHLQPME…FMRQSEMGRR (2405 aa)) the chain is on the extracellular side. The tract at residues 403 to 428 (SGGTGLETPDRKGKGAAEGKPSSLFP) is disordered. Residues 410–419 (TPDRKGKGAA) are compositionally biased toward basic and acidic residues. A glycan (N-linked (GlcNAc...) asparagine) is linked at N469. Residues 509–528 (ARSLEGPQRQSRGPVPPSSH) are disordered. EGF-like domains are found at residues 564 to 595 (SVDN…PDCG), 596 to 626 (RASC…AECD), 628 to 660 (PTNQ…ESCE), 661 to 692 (EVDC…TNCE), 694 to 727 (PRAT…HDCS), 728 to 759 (IEIC…ACDQ), 760 to 789 (RACH…EHCT), and 790 to 833 (IAHY…TGCD). Disulfide bonds link C568-C578, C572-C583, C585-C594, C603-C614, C616-C625, C632-C643, C637-C648, C650-C659, C664-C675, C669-C680, C682-C691, C702-C715, C717-C726, C731-C741, C735-C746, C748-C757, C762-C772, C766-C777, C779-C788, C802-C812, C806-C821, and C823-C832. Residues N942 and N1261 are each glycosylated (N-linked (GlcNAc...) asparagine). 5 NHL repeats span residues 1218 to 1261 (SCPS…PSGN), 1266 to 1310 (LEMR…VKST), 1336 to 1380 (TRCG…NGII), 1395 to 1446 (LSCD…VAGR), and 1525 to 1568 (CFSG…IRKN). The YD 1 repeat unit spans residues 1578–1597 (YELSSPIDQELYLFDTSGKH). A glycan (N-linked (GlcNAc...) asparagine) is linked at N1611. YD repeat units follow at residues 1614–1634 (YTGD…VNVR), 1677–1696 (YHGN…WTTF), and 1697–1719 (YEYD…SSFR). Residues N1707, N1743, N1801, and N1886 are each glycosylated (N-linked (GlcNAc...) asparagine). YD repeat units follow at residues 1889-1908 (YSPG…ERME), 1930-1948 (YLEK…YIFE), 1949-1969 (FDKN…QTLE), 1976-1993 (YYRN…VIQD), 1994-2015 (FTED…VIYK), 2016-2033 (YGKL…TKVS), 2036-2056 (YDET…FTCT), 2059-2079 (YRQI…EGMV), 2087-2106 (YDNS…TPLP), 2112-2129 (YDDV…GVIY), 2130-2156 (YDIN…MKEV), 2158-2171 (YEIF…MTVQ), 2172-2195 (YDNM…TRYS), 2198-2218 (YDAD…WRYS), 2219-2239 (YDLN…LTPL), 2241-2261 (YDLR…DEDG), 2273-2293 (YNSA…SVRY), and 2295-2315 (YDGL…LQFF). N-linked (GlcNAc...) asparagine glycosylation is present at N1987. An N-linked (GlcNAc...) asparagine glycan is attached at N2190. N2330 carries an N-linked (GlcNAc...) asparagine glycan. The stretch at 2341–2382 (YDLQGHLFAMELSSGDEFYIACDNIGTPLAVFSGTGLMIKQI) is one YD 23 repeat. The N-linked (GlcNAc...) asparagine glycan is linked to N2648.

Belongs to the tenascin family. Teneurin subfamily. In terms of assembly, homodimer; disulfide-linked. May also form heterodimer with either TENM1 or TENM2 or TENM3. As to expression, expressed in brain and spinal cord (at protein level). Expressed in neurons and oligodendrocytes of the spinal cord. Expressed weakly in kidney, lung and spleen. Expressed in the cortex, CA1, CA2 and CA3 of the hippocampus. Expressed in the white matter, Purkinje cells and molecular layer of the cerebellum.

The protein resides in the cell membrane. The protein localises to the cell projection. It is found in the nucleus. Its subcellular location is the cytoplasm. In terms of biological role, involved in neural development, regulating the establishment of proper connectivity within the nervous system. Plays a role in the establishment of the anterior-posterior axis during gastrulation. Regulates the differentiation and cellular process formation of oligodendrocytes and myelination of small-diameter axons in the central nervous system (CNS). Promotes activation of focal adhesion kinase. May function as a cellular signal transducer. The protein is Teneurin-4 (Tenm4) of Mus musculus (Mouse).